A 298-amino-acid chain; its full sequence is GTPase Era (298 aa).

In terms of domain architecture, Era-type G spans 4-171; that stretch reads KSGFVSIVGR…VEGIFELLPE (168 aa). Residues 12-19 are G1; sequence GRPNVGKS. A GTP-binding site is contributed by 12-19; sequence GRPNVGKS. The tract at residues 38–42 is G2; it reads QTTRN. Residues 59–62 are G3; it reads DTPG. GTP contacts are provided by residues 59–63 and 121–124; these read DTPGV and NKID. Residues 121–124 are G4; that stretch reads NKID. Residues 150 to 152 are G5; that stretch reads ISA. Positions 202–280 constitute a KH type-2 domain; the sequence is TREEIPHSVA…YLDLWVKVKE (79 aa).

Belongs to the TRAFAC class TrmE-Era-EngA-EngB-Septin-like GTPase superfamily. Era GTPase family. Monomer.

It is found in the cytoplasm. It localises to the cell membrane. An essential GTPase that binds both GDP and GTP, with rapid nucleotide exchange. Plays a role in 16S rRNA processing and 30S ribosomal subunit biogenesis and possibly also in cell cycle regulation and energy metabolism. The sequence is that of GTPase Era from Carboxydothermus hydrogenoformans (strain ATCC BAA-161 / DSM 6008 / Z-2901).